A 536-amino-acid chain; its full sequence is Transcriptional regulator RPN4 (536 aa).

2 stretches are compositionally biased toward low complexity: residues 154-181 and 361-370; these read QEQQ…QQQQ and SPSAISPASP. Disordered stretches follow at residues 154–196, 353–375, and 393–434; these read QEQQ…TRRR, VFDQ…SDDM, and EEIN…AEIT. Residues 393–411 are compositionally biased toward basic and acidic residues; it reads EEINKKHSKSGKKESKSQK. The segment at 440–471 adopts a C2H2-type zinc-finger fold; sequence HQCNLINPSTGEPCNKQFSRPYDLIRHQDTIH.

It localises to the nucleus. Its function is as follows. Transcriptional activator of a number of genes encoding proteasomal subunits. Binds to the DNA sequence 5'-GAAGGCAAAA-3', enriched in regions upstream of proteasome genes. The chain is Transcriptional regulator RPN4 (RPN4) from Candida albicans (strain SC5314 / ATCC MYA-2876) (Yeast).